Here is a 115-residue protein sequence, read N- to C-terminus: Tyrosine-protein phosphatase 24 (115 aa).

Residues 1 to 115 (WMMIVEQKCR…ETGSDAPMVV (115 aa)) enclose the Tyrosine-protein phosphatase domain. Aspartate 83 lines the substrate pocket.

The protein belongs to the protein-tyrosine phosphatase family.

It catalyses the reaction O-phospho-L-tyrosyl-[protein] + H2O = L-tyrosyl-[protein] + phosphate. The polypeptide is Tyrosine-protein phosphatase 24 (STY-24) (Styela plicata (Wrinkled sea squirt)).